A 30-amino-acid chain; its full sequence is Cycloviolacin-O1 (30 aa).

The segment at residues Gly1 to Asn30 is a cross-link (cyclopeptide (Gly-Asn)). Intrachain disulfides connect Cys4–Cys21, Cys8–Cys23, and Cys13–Cys28.

This is a cyclic peptide. Expressed in leaves, petals, petioles and roots but not in runners (at protein level).

Functionally, probably participates in a plant defense mechanism. This Viola odorata (Sweet violet) protein is Cycloviolacin-O1.